Consider the following 477-residue polypeptide: Probable malate:quinone oxidoreductase (477 aa).

This sequence belongs to the MQO family. The cofactor is FAD.

It catalyses the reaction (S)-malate + a quinone = a quinol + oxaloacetate. It participates in carbohydrate metabolism; tricarboxylic acid cycle; oxaloacetate from (S)-malate (quinone route): step 1/1. In Synechococcus sp. (strain RCC307), this protein is Probable malate:quinone oxidoreductase.